A 199-amino-acid polypeptide reads, in one-letter code: Transgelin-2 (199 aa).

The residue at position 2 (A2) is an N-acetylalanine. S11 is modified (phosphoserine). Residues K17 and K20 each carry the N6-acetyllysine modification. The region spanning 24-136 is the Calponin-homology (CH) domain; it reads ADLEQILIQW…RTLMNLGGLA (113 aa). The residue at position 163 (S163) is a Phosphoserine. Residue K171 forms a Glycyl lysine isopeptide (Lys-Gly) (interchain with G-Cter in SUMO2) linkage. The stretch at 174–199 is one Calponin-like repeat; that stretch reads IGLQMGTNRGASQAGMTGYGMPRQIL. T180 carries the phosphothreonine modification. Omega-N-methylarginine occurs at positions 182 and 196.

This sequence belongs to the calponin family.

The sequence is that of Transgelin-2 (TAGLN2) from Bos taurus (Bovine).